A 266-amino-acid chain; its full sequence is Metallo-beta-lactamase VIM-1 (266 aa).

The signal sequence occupies residues Met-1–Ala-20. Residues His-114, His-116, Asp-118, His-179, Cys-198, and His-240 each contribute to the Zn(2+) site.

This sequence belongs to the metallo-beta-lactamase superfamily. Class-B beta-lactamase family. Monomer. It depends on Zn(2+) as a cofactor.

The protein resides in the periplasm. It catalyses the reaction a beta-lactam + H2O = a substituted beta-amino acid. Its activity is regulated as follows. Weakly inhibited by beta-lactamase-blocking agent sulbactam. Functionally, class B beta-lactamase which confers resistance to the beta-lactam antibiotics, including penicillins, cephalosporins and carbapenems. Acts via hydrolysis of the beta-lactam ring. Has penicillin-, cephalosporin- and carbapenem-hydrolyzing activities. The chain is Metallo-beta-lactamase VIM-1 from Pseudomonas aeruginosa (strain ATCC 15692 / DSM 22644 / CIP 104116 / JCM 14847 / LMG 12228 / 1C / PRS 101 / PAO1).